Here is a 439-residue protein sequence, read N- to C-terminus: tRNA(Ile)-lysidine synthase (439 aa).

An ATP-binding site is contributed by 23-28 (SGGLDS).

This sequence belongs to the tRNA(Ile)-lysidine synthase family.

The protein localises to the cytoplasm. The catalysed reaction is cytidine(34) in tRNA(Ile2) + L-lysine + ATP = lysidine(34) in tRNA(Ile2) + AMP + diphosphate + H(+). Its function is as follows. Ligates lysine onto the cytidine present at position 34 of the AUA codon-specific tRNA(Ile) that contains the anticodon CAU, in an ATP-dependent manner. Cytidine is converted to lysidine, thus changing the amino acid specificity of the tRNA from methionine to isoleucine. This Methylococcus capsulatus (strain ATCC 33009 / NCIMB 11132 / Bath) protein is tRNA(Ile)-lysidine synthase.